Here is a 71-residue protein sequence, read N- to C-terminus: Large ribosomal subunit protein bL31 (71 aa).

Positions 16, 18, 36, and 39 each coordinate Zn(2+).

The protein belongs to the bacterial ribosomal protein bL31 family. Type A subfamily. As to quaternary structure, part of the 50S ribosomal subunit. Zn(2+) serves as cofactor.

Functionally, binds the 23S rRNA. In Thermus thermophilus (strain ATCC BAA-163 / DSM 7039 / HB27), this protein is Large ribosomal subunit protein bL31.